Consider the following 1132-residue polypeptide: Phospholipid-transporting ATPase IG (1132 aa).

At 1-66 (MQMVPSLPPA…NFLPKNLFEQ (66 aa)) the chain is on the cytoplasmic side. The chain crosses the membrane as a helical span at residues 67–85 (FRRIANFYFLIIFLVQVTV). Residue aspartate 86 is a topological domain, extracellular. The chain crosses the membrane as a helical span at residues 87-107 (TPTSPVTSGLPLFFVITVTAI). At 108-290 (KQGYEDCLRH…SQKRSAVEKS (183 aa)) the chain is on the cytoplasmic side. A helical membrane pass occupies residues 291–311 (INAFLIVYLFILLTKAAVCTT). Over 312 to 346 (LKYVWQSTPYNDEPWYNQKTQKERETLKVLKMFTD) the chain is Extracellular. Residues 347-367 (FLSFMVLFNFIIPVSMYVTVE) form a helical membrane-spanning segment. Topologically, residues 368–879 (MQKFLGSFFI…YVRIAHLVQY (512 aa)) are cytoplasmic. Residue aspartate 412 is the 4-aspartylphosphate intermediate of the active site. The ATP site is built by aspartate 412, lysine 413, and threonine 414. Aspartate 412 contributes to the Mg(2+) binding site. Residue threonine 414 coordinates Mg(2+). Serine 445 is modified (phosphoserine). ATP is bound by residues glutamate 501, phenylalanine 543, lysine 566, arginine 597, threonine 677, glycine 678, aspartate 679, arginine 792, and lysine 798. Residue aspartate 819 participates in Mg(2+) binding. Positions 822 and 823 each coordinate ATP. Aspartate 823 contacts Mg(2+). A helical transmembrane segment spans residues 880 to 900 (FFYKNLCFILPQFLYQFFCGF). Residues 901–908 (SQQPLYDA) lie on the Extracellular side of the membrane. The helical transmembrane segment at 909–929 (AYLTMYNICFTSLPILAYSLL) threads the bilayer. The Cytoplasmic portion of the chain corresponds to 930–955 (EQHINIDTLTSDPRLYMKISGNAMLQ). Residues 956 to 976 (LGPFLYWTFLAAFEGTVFFFG) traverse the membrane as a helical segment. At 977–995 (TYFLFQTASLEENGKVYGN) the chain is on the extracellular side. Residues 996-1016 (WTFGTIVFTVLVFTVTLKLAL) form a helical membrane-spanning segment. Topologically, residues 1017 to 1026 (DTRFWTWINH) are cytoplasmic. A helical membrane pass occupies residues 1027–1047 (FVIWGSLAFYVFFSFFWGGII). The Extracellular segment spans residues 1048–1069 (WPFLKQQRMYFVFAQMLSSVST). A helical transmembrane segment spans residues 1070–1090 (WLAIILLIFISLFPEILLIVL). At 1091–1132 (KNVRRRSARRNLSCRRASDSLSARPSVRPLLLRTFSDESNVL) the chain is on the cytoplasmic side. Residues serine 1108, serine 1116, and serine 1126 each carry the phosphoserine modification. A Di-leucine motif motif is present at residues 1116–1121 (SVRPLL).

The protein belongs to the cation transport ATPase (P-type) (TC 3.A.3) family. Type IV subfamily. Component of a P4-ATPase flippase complex which consists of a catalytic alpha subunit ATP11C and an accessory beta subunit TMEM30A. Requires Mg(2+) as cofactor. Proteolytically cleaved by CASP3, CASP6 and CASP7. In terms of processing, phosphorylated at Ser-1116 likely by PRKCA; this creates a functional di-leucine motif that is sufficient for endocytosis. As to expression, widely expressed.

The protein resides in the cell membrane. It is found in the endoplasmic reticulum membrane. Its subcellular location is the early endosome membrane. It localises to the recycling endosome membrane. The enzyme catalyses ATP + H2O + phospholipidSide 1 = ADP + phosphate + phospholipidSide 2.. It carries out the reaction a 1,2-diacyl-sn-glycero-3-phospho-L-serine(out) + ATP + H2O = a 1,2-diacyl-sn-glycero-3-phospho-L-serine(in) + ADP + phosphate + H(+). It catalyses the reaction a 1,2-diacyl-sn-glycero-3-phosphoethanolamine(out) + ATP + H2O = a 1,2-diacyl-sn-glycero-3-phosphoethanolamine(in) + ADP + phosphate + H(+). Its activity is regulated as follows. The flippase activity is inactivated by caspase-mediated cleavage in apoptotic cells, allowing for PS exposure on the cell surface and engulfment of apoptotic cells by macrophages. The ATPase activity is up-regulated by aminophospholipids PS and PE and down-regulated by Increasing intracellular Ca2+ levels. Its function is as follows. Catalytic component of a P4-ATPase flippase complex which catalyzes the hydrolysis of ATP coupled to the transport of aminophospholipids, phosphatidylserines (PS) and phosphatidylethanolamines (PE), from the outer to the inner leaflet of the plasma membrane. Major PS-flippase in immune cell subsets. In erythrocyte plasma membrane, it is required to maintain PS in the inner leaflet preventing its exposure on the surface. This asymmetric distribution is critical for the survival of erythrocytes in circulation since externalized PS is a phagocytic signal for erythrocyte clearance by splenic macrophages. Required for B cell differentiation past the pro-B cell stage. Seems to mediate PS flipping in pro-B cells. May be involved in the transport of cholestatic bile acids. The polypeptide is Phospholipid-transporting ATPase IG (Homo sapiens (Human)).